The primary structure comprises 269 residues: Imidazoleglycerol-phosphate dehydratase 1, chloroplastic (269 aa).

Disordered stretches follow at residues 1-31 (MTTA…GSGG) and 54-73 (SGVG…VSSR). The N-terminal 52 residues, 1–52 (MTTAPFVSPSLPRLHSARASPFPKPSVGSGGGVAFPARTYGSSLRLRSAVMS), are a transit peptide targeting the chloroplast. Substrate contacts are provided by residues Glu83, 109-117 (HMLDQLASH), 135-139 (HHSNE), Arg161, and Arg183. 4 residues coordinate Mn(2+): His109, His135, His136, and Glu139. Mn(2+) contacts are provided by His207, His231, His232, and Glu235. Residues 231–239 (HHIIEATFK) and 261–263 (SSK) contribute to the substrate site.

The protein belongs to the imidazoleglycerol-phosphate dehydratase family. Mn(2+) is required as a cofactor.

It localises to the plastid. The protein localises to the chloroplast. It carries out the reaction D-erythro-1-(imidazol-4-yl)glycerol 3-phosphate = 3-(imidazol-4-yl)-2-oxopropyl phosphate + H2O. Its pathway is amino-acid biosynthesis; L-histidine biosynthesis; L-histidine from 5-phospho-alpha-D-ribose 1-diphosphate: step 6/9. This chain is Imidazoleglycerol-phosphate dehydratase 1, chloroplastic, found in Triticum aestivum (Wheat).